The sequence spans 354 residues: Guanine nucleotide-binding protein G(t) subunit alpha-2 (354 aa).

The disordered stretch occupies residues 1 to 27; that stretch reads MGSGASAEDKELAKRSKELEKKLQEDA. A lipid anchor (N-myristoyl glycine) is attached at Gly-2. Basic and acidic residues predominate over residues 7-27; it reads AEDKELAKRSKELEKKLQEDA. A G-alpha domain is found at 32–354; it reads KTVKLLLLGA…KENLKDCGLF (323 aa). The interval 35 to 48 is G1 motif; that stretch reads KLLLLGAGESGKST. GTP contacts are provided by residues 40-47, 175-181, 200-204, 269-272, and Ala-326; these read GAGESGKS, LRSRVKT, DVGGQ, and NKKD. Residues Ser-47 and Thr-181 each contribute to the Mg(2+) site. Positions 173 to 181 are G2 motif; sequence DVLRSRVKT. The segment at 196–205 is G3 motif; sequence FRMFDVGGQR. The tract at residues 265-272 is G4 motif; sequence VLFLNKKD. A G5 motif region spans residues 324–329; that stretch reads TCATDT.

Belongs to the G-alpha family. G(i/o/t/z) subfamily. In terms of assembly, g proteins are composed of 3 units; alpha, beta and gamma. The alpha chain contains the guanine nucleotide binding site. As to expression, retinal rod outer segment.

The protein localises to the cell projection. The protein resides in the cilium. It is found in the photoreceptor outer segment. Its subcellular location is the photoreceptor inner segment. Its function is as follows. Guanine nucleotide-binding proteins (G proteins) are involved as modulators or transducers in various transmembrane signaling systems. Transducin is an amplifier and one of the transducers of a visual impulse that performs the coupling between rhodopsin and cGMP-phosphodiesterase. The sequence is that of Guanine nucleotide-binding protein G(t) subunit alpha-2 (GNAT2) from Bos taurus (Bovine).